The primary structure comprises 475 residues: BTB/POZ domain-containing protein 10 (475 aa).

Positions 1–143 (MAGRPHPYDG…SSQSSSDGSC (143 aa)) are disordered. The span at 22-31 (LHSRPRKLYK) shows a compositional bias: basic residues. Basic and acidic residues predominate over residues 57-80 (GHERSRDRRRSSDRSRDSSHERTE). Positions 81 to 94 (SQLTPCIRNVTSPT) are enriched in polar residues. A compositionally biased stretch (basic and acidic residues) spans 97 to 107 (HHVEREKDHSS). A compositionally biased stretch (low complexity) spans 108-142 (SRPSSPRPQKASPNGSISSAGNSSRNSSQSSSDGS). The segment at 146 to 475 (AGEMVFVYEN…LDPDAQNPML (330 aa)) is interaction with AKT family members. The 75-residue stretch at 167–241 (ERVTLIVDNT…YKTGIIRCPD (75 aa)) folds into the BTB domain. Residues 455-475 (LPIHPPSGNSDLDPDAQNPML) form a disordered region.

Interacts (via C-terminal 330-amino-acid region) with AKT1; AKT2 and AKT3. Interacts with PPP2CA and PPP1CA. Ubiquitously expressed. Highly expressed in adult brain, testis, aorta and small intestine and weakly expressed in the heart, lung, liver, kidney, pancreas, spleen, thymus, prostate, ovary and colon. Down-regulated in glioma.

Its subcellular location is the nucleus. The protein resides in the cytoplasm. In terms of biological role, plays a major role as an activator of AKT family members by inhibiting PPP2CA-mediated dephosphorylation, thereby keeping AKTs activated. Plays a role in preventing motor neuronal death and accelerating the growth of pancreatic beta cells. The sequence is that of BTB/POZ domain-containing protein 10 (BTBD10) from Homo sapiens (Human).